Here is a 120-residue protein sequence, read N- to C-terminus: Large ribosomal subunit protein bL20 (120 aa).

It belongs to the bacterial ribosomal protein bL20 family.

Functionally, binds directly to 23S ribosomal RNA and is necessary for the in vitro assembly process of the 50S ribosomal subunit. It is not involved in the protein synthesizing functions of that subunit. The sequence is that of Large ribosomal subunit protein bL20 from Baumannia cicadellinicola subsp. Homalodisca coagulata.